We begin with the raw amino-acid sequence, 123 residues long: Large ribosomal subunit protein uL29 (123 aa).

Belongs to the universal ribosomal protein uL29 family. Component of the large ribosomal subunit.

It localises to the cytoplasm. Its function is as follows. Component of the large ribosomal subunit. The ribosome is a large ribonucleoprotein complex responsible for the synthesis of proteins in the cell. The protein is Large ribosomal subunit protein uL29 (rpl35) of Hippocampus comes (Tiger tail seahorse).